A 366-amino-acid chain; its full sequence is MQSSLPQFTFKWPKGPEAIILTGTFDDWKGTLPMVKDPSGAFEITLPVTFDSPSSKFYFKFIVDGQWLPSKDYKVNIDEGVENNFITEEDVIKQRENGSSTLVPESAGLAVSKNAPLIEPEAEKRAKKLRKFKIKRVIKTNKQTGERSIFSQEVVELPDSEDETQQVNKTGKNADGLSGTTTIIENNVGVNEEKAIKPYEENHPKVNLVKSEGYVTDGLGKTQSSESRLYELSAEDLEKEEEEEDEDKGGGKDTSTSADAEASEDQNKEPLSKSAKFEKPEEKVPVSSITSHAKETSVKPTGKVATETQTYETKQGAPTAAAKKIEAKKATRPSKPKGTKETPYKGVQKNPAKNGGFFKKLAQLLK.

A disordered region spans residues 159-180 (DSEDETQQVNKTGKNADGLSGT). The residue at position 160 (S160) is a Phosphoserine. Phosphothreonine is present on T216. The interval 217-366 (DGLGKTQSSE…FFKKLAQLLK (150 aa)) is disordered. Acidic residues predominate over residues 233–247 (SAEDLEKEEEEEDED). The segment covering 265–284 (DQNKEPLSKSAKFEKPEEKV) has biased composition (basic and acidic residues). S288 is subject to Phosphoserine. K314 participates in a covalent cross-link: Glycyl lysine isopeptide (Lys-Gly) (interchain with G-Cter in ubiquitin).

Belongs to the CRP1/MDG1 family.

The protein resides in the cell membrane. Functionally, involved in G-protein mediated signal transduction and in the regulation of polarized cell growth in pheromone-induced cells. This chain is Signal transduction protein MDG1 (MDG1), found in Saccharomyces cerevisiae (strain JAY291) (Baker's yeast).